The chain runs to 357 residues: Scopoletin 8-hydroxylase (357 aa).

In terms of domain architecture, Fe2OG dioxygenase spans 206–307; the sequence is MGTKMVNMNY…RVSVPIFTAP (102 aa). Residue Tyr-216 participates in 2-oxoglutarate binding. 3 residues coordinate Fe cation: His-231, Asp-233, and His-288. 2-oxoglutarate contacts are provided by Arg-298 and Ser-300.

This sequence belongs to the iron/ascorbate-dependent oxidoreductase family. The cofactor is L-ascorbate. Fe(2+) serves as cofactor. Expressed in both primary and lateral roots under iron-deficient conditions, except in apical root zones, and mostly in the root epidermal layer.

The catalysed reaction is scopoletin + 2-oxoglutarate + O2 = fraxetin + succinate + CO2. Its pathway is phenylpropanoid metabolism. In terms of biological role, involved in the pathway of sideretin biosynthesis from feruloyl CoA, a redox-active catecholic metabolite exuded by roots in response to iron deficiency in order to facilitate the uptake of iron; this pathway consists in the successive conversion from feruloyl CoA to scopoletin, from scopoletin to fraxetin and from fraxetin to sideretin. Catalyzes the biosynthesis of fraxetin via scopoletin hydroxylation. The protein is Scopoletin 8-hydroxylase of Arabidopsis thaliana (Mouse-ear cress).